The sequence spans 563 residues: Arylsulfatase K (563 aa).

Positions 1–17 are cleaved as a signal peptide; it reads MLLLLVSVIVALALVAP. Ca(2+)-binding residues include Asp40 and Cys80. Cys80 (nucleophile) is an active-site residue. Position 80 is a 3-oxoalanine (Cys) (Cys80). An N-linked (GlcNAc...) asparagine glycan is attached at Asn108. Substrate is bound at residue Lys128. A glycan (N-linked (GlcNAc...) asparagine) is linked at Asn191. His249 contacts substrate. Asn260 is a glycosylation site (N-linked (GlcNAc...) asparagine). Positions 311 and 312 each coordinate Ca(2+). Asn373, Asn411, and Asn496 each carry an N-linked (GlcNAc...) asparagine glycan.

It belongs to the sulfatase family. It depends on Ca(2+) as a cofactor. The conversion to 3-oxoalanine (also known as C-formylglycine, FGly), of a serine or cysteine residue in prokaryotes and of a cysteine residue in eukaryotes, is critical for catalytic activity. In terms of processing, the 75-kDa precursor undergoes proteolytic processing to yield a 23 kDa form. Post-translationally, N-glycosylated with both high mannose and complex type sugars.

The protein localises to the secreted. Its subcellular location is the lysosome. The catalysed reaction is an aryl sulfate + H2O = a phenol + sulfate + H(+). It catalyses the reaction Hydrolysis of the 2-sulfate groups of the 2-O-sulfo-D-glucuronate residues of chondroitin sulfate, heparin and heparitin sulfate.. Catalyzes the hydrolysis of pseudosubstrates such as p-nitrocatechol sulfate and p-nitrophenyl sulfate. Catalyzes the hydrolysis of the 2-sulfate groups of the 2-O-sulfo-D-glucuronate residues of chondroitin sulfate, heparin and heparitin sulfate. Acts selectively on 2-sulfoglucuronate and lacks activity against 2-sulfoiduronate. In Rattus norvegicus (Rat), this protein is Arylsulfatase K (Arsk).